The following is a 280-amino-acid chain: Bis(5'-nucleosyl)-tetraphosphatase, symmetrical (280 aa).

Belongs to the Ap4A hydrolase family.

It catalyses the reaction P(1),P(4)-bis(5'-adenosyl) tetraphosphate + H2O = 2 ADP + 2 H(+). Its function is as follows. Hydrolyzes diadenosine 5',5'''-P1,P4-tetraphosphate to yield ADP. The sequence is that of Bis(5'-nucleosyl)-tetraphosphatase, symmetrical from Shigella flexneri serotype 5b (strain 8401).